Reading from the N-terminus, the 147-residue chain is MKLVVQRVTEASVTVEGAVAGRIGPGIMALVGITHEDTEEDAAYLADKIVNLRIFDDESGKMNLSLLDTGGEILSVSQFTLYGETKKGRRPNFMNAAKPDQAVLLYEKWNELLREKGVKVETGIFGAMMDVQLTNSGPITLIMDSKQ.

The Gly-cisPro motif, important for rejection of L-amino acids motif lies at 137–138 (GP).

The protein belongs to the DTD family. In terms of assembly, homodimer.

The protein resides in the cytoplasm. The catalysed reaction is glycyl-tRNA(Ala) + H2O = tRNA(Ala) + glycine + H(+). It carries out the reaction a D-aminoacyl-tRNA + H2O = a tRNA + a D-alpha-amino acid + H(+). Its function is as follows. An aminoacyl-tRNA editing enzyme that deacylates mischarged D-aminoacyl-tRNAs. Also deacylates mischarged glycyl-tRNA(Ala), protecting cells against glycine mischarging by AlaRS. Acts via tRNA-based rather than protein-based catalysis; rejects L-amino acids rather than detecting D-amino acids in the active site. By recycling D-aminoacyl-tRNA to D-amino acids and free tRNA molecules, this enzyme counteracts the toxicity associated with the formation of D-aminoacyl-tRNA entities in vivo and helps enforce protein L-homochirality. This Bacillus velezensis (strain DSM 23117 / BGSC 10A6 / LMG 26770 / FZB42) (Bacillus amyloliquefaciens subsp. plantarum) protein is D-aminoacyl-tRNA deacylase.